The primary structure comprises 460 residues: DNA repair protein RadA (460 aa).

The C4-type zinc finger occupies 11–28 (CNECGADYPRWQGQCSAC). 102 to 109 (GNPGAGKS) is a binding site for ATP. The RadA KNRFG motif motif lies at 258 to 262 (KNRFG). The lon-protease-like stretch occupies residues 357 to 460 (DVFVNVVGGV…SDALSVFDDL (104 aa)).

Belongs to the RecA family. RadA subfamily.

Functionally, DNA-dependent ATPase involved in processing of recombination intermediates, plays a role in repairing DNA breaks. Stimulates the branch migration of RecA-mediated strand transfer reactions, allowing the 3' invading strand to extend heteroduplex DNA faster. Binds ssDNA in the presence of ADP but not other nucleotides, has ATPase activity that is stimulated by ssDNA and various branched DNA structures, but inhibited by SSB. Does not have RecA's homology-searching function. Genetic experiments involving combination of radA mutations with mutations in recA, recB, recG, recJ, recQ, ruvA and ruvC show it plays a role in recombination and recombinational repair, probably involving stabilizing or processing branched DNA or blocked replication forks. Is genetically synergistic to RecG and RuvABC. May be involved in recovery of genetic rearrangements during replication fork breakdown. In combination with RadD is important in recovery from double-strand DNA breaks (DSB). The sequence is that of DNA repair protein RadA from Escherichia coli (strain K12).